Reading from the N-terminus, the 632-residue chain is Protein EAP1 (632 aa).

Disordered regions lie at residues 1–80, 149–204, and 248–313; these read MELN…KKNK, MGPP…DDEE, and KSKG…PSLS. Polar residues-rich tracts occupy residues 7–38 and 54–69; these read SIISSSQFSGELSDSDTAAATHKSQQAISNLF and VESSTDSSNISVATSG. Phosphoserine is present on serine 30. Residues serine 281 and serine 282 each carry the phosphoserine modification. Residues 288–298 are compositionally biased toward basic and acidic residues; sequence NLKRQDKKEES. Serine 327 and serine 344 each carry phosphoserine. A disordered region spans residues 347 to 378; sequence SLPSLDNNNQVPSSNVSVVNNDGNSTPHQSGS. A compositionally biased stretch (low complexity) spans 353–371; that stretch reads NNNQVPSSNVSVVNNDGNS. Serine 387 is subject to Phosphoserine. Disordered regions lie at residues 429-541 and 587-632; these read QHPP…PPPP and QGNF…KNIK. 440 to 447 lines the ATP pocket; that stretch reads GLLNKGKS. Pro residues predominate over residues 474–486; that stretch reads PNFPQRMMPPPPG. Over residues 492–505 the composition is skewed to basic and acidic residues; the sequence is KDSKDVNKKEDRQL. 3 stretches are compositionally biased toward polar residues: residues 507–516, 590–603, and 610–621; these read QNKNPNGTRN, FPPNFQQGFGSNSP, and INANGKNVTNQL.

In terms of assembly, interacts with SMY2, SYH1 and eIF4E.

The protein localises to the cytoplasm. Can regulate translation through binding to eIF4E. Competes with eIF4G and p20 for binding to eIF4E in vivo and inhibits cap-dependent translation in vitro. Plays a role in cell growth and is implicated in the TOR signaling cascade. Functions independently of eIF4E to maintain genetic stability and to attenuate GCN4 translation upon TOR inactivation. The sequence is that of Protein EAP1 (EAP1) from Saccharomyces cerevisiae (strain ATCC 204508 / S288c) (Baker's yeast).